A 207-amino-acid polypeptide reads, in one-letter code: Large ribosomal subunit protein uL4 (207 aa).

Positions 53–76 (TVSEVSGTTKKPFKQKGTGNARQG) are disordered.

This sequence belongs to the universal ribosomal protein uL4 family. In terms of assembly, part of the 50S ribosomal subunit.

One of the primary rRNA binding proteins, this protein initially binds near the 5'-end of the 23S rRNA. It is important during the early stages of 50S assembly. It makes multiple contacts with different domains of the 23S rRNA in the assembled 50S subunit and ribosome. Its function is as follows. Forms part of the polypeptide exit tunnel. This chain is Large ribosomal subunit protein uL4, found in Rickettsia bellii (strain OSU 85-389).